We begin with the raw amino-acid sequence, 257 residues long: Acyl-[acyl-carrier-protein]--UDP-N-acetylglucosamine O-acyltransferase (257 aa).

It belongs to the transferase hexapeptide repeat family. LpxA subfamily. Homotrimer.

It is found in the cytoplasm. The enzyme catalyses a (3R)-hydroxyacyl-[ACP] + UDP-N-acetyl-alpha-D-glucosamine = a UDP-3-O-[(3R)-3-hydroxyacyl]-N-acetyl-alpha-D-glucosamine + holo-[ACP]. Its pathway is glycolipid biosynthesis; lipid IV(A) biosynthesis; lipid IV(A) from (3R)-3-hydroxytetradecanoyl-[acyl-carrier-protein] and UDP-N-acetyl-alpha-D-glucosamine: step 1/6. Involved in the biosynthesis of lipid A, a phosphorylated glycolipid that anchors the lipopolysaccharide to the outer membrane of the cell. The sequence is that of Acyl-[acyl-carrier-protein]--UDP-N-acetylglucosamine O-acyltransferase from Fusobacterium nucleatum subsp. nucleatum (strain ATCC 25586 / DSM 15643 / BCRC 10681 / CIP 101130 / JCM 8532 / KCTC 2640 / LMG 13131 / VPI 4355).